Here is a 422-residue protein sequence, read N- to C-terminus: Serine hydroxymethyltransferase (422 aa).

Residues L121 and 125 to 127 each bind (6S)-5,6,7,8-tetrahydrofolate; that span reads GHL. Position 230 is an N6-(pyridoxal phosphate)lysine (K230). Position 355-357 (355-357) interacts with (6S)-5,6,7,8-tetrahydrofolate; that stretch reads SPF.

The protein belongs to the SHMT family. In terms of assembly, homodimer. Requires pyridoxal 5'-phosphate as cofactor.

Its subcellular location is the cytoplasm. It catalyses the reaction (6R)-5,10-methylene-5,6,7,8-tetrahydrofolate + glycine + H2O = (6S)-5,6,7,8-tetrahydrofolate + L-serine. It participates in one-carbon metabolism; tetrahydrofolate interconversion. Its pathway is amino-acid biosynthesis; glycine biosynthesis; glycine from L-serine: step 1/1. In terms of biological role, catalyzes the reversible interconversion of serine and glycine with tetrahydrofolate (THF) serving as the one-carbon carrier. This reaction serves as the major source of one-carbon groups required for the biosynthesis of purines, thymidylate, methionine, and other important biomolecules. Also exhibits THF-independent aldolase activity toward beta-hydroxyamino acids, producing glycine and aldehydes, via a retro-aldol mechanism. This is Serine hydroxymethyltransferase from Teredinibacter turnerae (strain ATCC 39867 / T7901).